A 257-amino-acid polypeptide reads, in one-letter code: 2,3,4,5-tetrahydropyridine-2,6-dicarboxylate N-acetyltransferase (257 aa).

This sequence belongs to the transferase hexapeptide repeat family. DapH subfamily.

It carries out the reaction (S)-2,3,4,5-tetrahydrodipicolinate + acetyl-CoA + H2O = L-2-acetamido-6-oxoheptanedioate + CoA. It functions in the pathway amino-acid biosynthesis; L-lysine biosynthesis via DAP pathway; LL-2,6-diaminopimelate from (S)-tetrahydrodipicolinate (acetylase route): step 1/3. Its function is as follows. Catalyzes the transfer of an acetyl group from acetyl-CoA to tetrahydrodipicolinate. This Lactococcus lactis subsp. cremoris (strain SK11) protein is 2,3,4,5-tetrahydropyridine-2,6-dicarboxylate N-acetyltransferase.